The chain runs to 170 residues: Transmembrane protein 252 (170 aa).

Transmembrane regions (helical) follow at residues 8-28 and 40-60; these read ILCA…AFFI and LIAA…GIFW. A disordered region spans residues 112-147; the sequence is CPAEREASGIPPPLYTETGLEFQDGNDSHPEAPPSY.

It is found in the membrane. This Homo sapiens (Human) protein is Transmembrane protein 252 (TMEM252).